A 674-amino-acid polypeptide reads, in one-letter code: Alpha-L-arabinofuranosidase 2 (674 aa).

Residues 1-24 form the signal peptide; it reads MDMETSWRFLRSVCLLSFILGSFS. Asparagine 48, asparagine 180, asparagine 199, asparagine 210, asparagine 361, asparagine 522, and asparagine 548 each carry an N-linked (GlcNAc...) asparagine glycan.

The protein belongs to the glycosyl hydrolase 51 family. In terms of tissue distribution, high expression in flowers, siliques and stems. Observed in the vasculature of older root tissue, at the tip of anthers and in the petal blade of fully developed flowers, in floral abscission zones and in silique replum tissue. Expressed in the cambium and phloem, but not in the xylem or in the vascular system of floral tissues.

The protein resides in the secreted. Its subcellular location is the extracellular space. It is found in the extracellular matrix. It carries out the reaction Hydrolysis of terminal non-reducing alpha-L-arabinofuranoside residues in alpha-L-arabinosides.. May be involved in the coordinated dissolution of the cell wall matrix during abscission and in the secondary cell wall formation in xylem vessels. The sequence is that of Alpha-L-arabinofuranosidase 2 (ASD2) from Arabidopsis thaliana (Mouse-ear cress).